A 214-amino-acid polypeptide reads, in one-letter code: Large ribosomal subunit protein bL25 (214 aa).

Disordered stretches follow at residues 1–23 (MSNEFLLNAESRSDTGKGASRRL) and 182–214 (DHDQPVAAVHQPKVRASSDDDDAAEGEEAASEE). Residues 200 to 214 (DDDDAAEGEEAASEE) are compositionally biased toward acidic residues.

It belongs to the bacterial ribosomal protein bL25 family. CTC subfamily. In terms of assembly, part of the 50S ribosomal subunit; part of the 5S rRNA/L5/L18/L25 subcomplex. Contacts the 5S rRNA. Binds to the 5S rRNA independently of L5 and L18.

In terms of biological role, this is one of the proteins that binds to the 5S RNA in the ribosome where it forms part of the central protuberance. This is Large ribosomal subunit protein bL25 from Alcanivorax borkumensis (strain ATCC 700651 / DSM 11573 / NCIMB 13689 / SK2).